The chain runs to 320 residues: o-succinylbenzoate synthase (320 aa).

Lys-133 acts as the Proton donor in catalysis. Asp-161, Glu-190, and Asp-213 together coordinate Mg(2+). Lys-235 serves as the catalytic Proton acceptor.

The protein belongs to the mandelate racemase/muconate lactonizing enzyme family. MenC type 1 subfamily. Requires a divalent metal cation as cofactor.

The catalysed reaction is (1R,6R)-6-hydroxy-2-succinyl-cyclohexa-2,4-diene-1-carboxylate = 2-succinylbenzoate + H2O. It functions in the pathway quinol/quinone metabolism; 1,4-dihydroxy-2-naphthoate biosynthesis; 1,4-dihydroxy-2-naphthoate from chorismate: step 4/7. It participates in quinol/quinone metabolism; menaquinone biosynthesis. Converts 2-succinyl-6-hydroxy-2,4-cyclohexadiene-1-carboxylate (SHCHC) to 2-succinylbenzoate (OSB). This chain is o-succinylbenzoate synthase, found in Salmonella paratyphi B (strain ATCC BAA-1250 / SPB7).